We begin with the raw amino-acid sequence, 164 residues long: UPF0304 protein YfbU (164 aa).

This sequence belongs to the UPF0304 family.

This chain is UPF0304 protein YfbU, found in Shigella flexneri serotype 5b (strain 8401).